The chain runs to 263 residues: Probable ABC transporter permease protein ycf63 (263 aa).

The next 6 membrane-spanning stretches (helical) occupy residues 43 to 63 (LVGP…SMVF), 82 to 102 (AVIV…VIIA), 136 to 156 (LVFP…TISL), 159 to 179 (SIAI…SIFL), 199 to 219 (LCFG…SSGG), and 230 to 250 (SVVT…YFMF).

It belongs to the MlaE permease family.

Its subcellular location is the plastid. It is found in the chloroplast membrane. Its function is as follows. Could be part of an ABC transporter complex. The chain is Probable ABC transporter permease protein ycf63 (ycf63) from Porphyra purpurea (Red seaweed).